The following is a 144-amino-acid chain: Major allergen Blo t 12 (144 aa).

Positions 1 to 20 are cleaved as a signal peptide; it reads MKSVLIFLVAIALFSANIVS. Residues 24–77 are disordered; sequence QTTRGRHTEPDDHHEKPTTQCTHEETTSTQHHHEEVVTTQTPHHEEKTTTEETH. The 53-residue stretch at 92 to 144 folds into the Chitin-binding type-2 domain; the sequence is HVVCHEEGPIHIQEMCNKYIICSKSGSLWYITVMPCSIGTKFDPISRNCVLDN. A disulfide bridge links Cys127 with Cys140.

The sequence is that of Major allergen Blo t 12 from Blomia tropicalis (Mite).